The chain runs to 611 residues: MAYSDYSDGADDMPDFHDEGEFDDYLNDDEYDLMNEVFPTLKAQLQDYQGWDNLSLKLALFDNNFDLESTLAELKKTLKKKKTPKKPIAAANGSANVTQKLANISISQQRPNDRLPDWLDEEESEGERNGEEANDEKTVQRYYKTTVPTKPKKPHDISAFVKSALPHLSFVVLGHVDAGKSTLMGRLLYDLNIVNQSQLRKLQRESETMGKSSFKFAWIMDQTNEERERGVTVSICTSHFSTHRANFTIVDAPGHRDFVPNAIMGISQADMAILCVDCSTNAFESGFDLDGQTKEHMLLASSLGIHNLIIAMNKMDNVDWSQQRFEEIKSKLLPYLVDIGFFEDNINWVPISGFSGEGVYKIEYTDEVRQWYNGPNLMSTLENAAFKISKENEGINKDDPFLFSVLEIIPSKKTSNDLALVSGKLESGSIQPGESLTIYPSEQSCIVDKIQVGSQQGQSTNHEETDVAIKGDFVTLKLRKAYPEDIQNGDLAASVDYSSIHSAQCFVLELTTFDMNRPLLPGTPFILFIGVKEQPARIKRLISFIDKGNTASKKKIRHLGSKQRAFVEIELIEVKRWIPLLTAHENDRLGRVVLRKDGRTIAAGKISEITQ.

Disordered stretches follow at residues 1-21 (MAYSDYSDGADDMPDFHDEGE) and 105-138 (SISQQRPNDRLPDWLDEEESEGERNGEEANDEKT). The residue at position 124 (Ser124) is a Phosphoserine. Residues 126–138 (GERNGEEANDEKT) show a composition bias toward basic and acidic residues. The tr-type G domain occupies 165-390 (LPHLSFVVLG…LENAAFKISK (226 aa)). The tract at residues 174-181 (GHVDAGKS) is G1. Residue 174-181 (GHVDAGKS) participates in GTP binding. The segment at 230-234 (GVTVS) is G2. Residues 251 to 254 (DAPG) form a G3 region. GTP-binding positions include 313–316 (NKMD) and 352–354 (SGF). Positions 313 to 316 (NKMD) are G4. Positions 352-354 (SGF) are G5.

It belongs to the TRAFAC class translation factor GTPase superfamily. Classic translation factor GTPase family. Component of the Dom34-Hbs1 complex, also named Pelota-HBS1L complex, composed of DOM34 and HBS1.

The protein localises to the cytoplasm. The catalysed reaction is GTP + H2O = GDP + phosphate + H(+). GTPase component of the Dom34-Hbs1 complex, a complex that recognizes stalled ribosomes and triggers the No-Go Decay (NGD) pathway. The Dom34-Hbs1 complex recognizes ribosomes stalled at the 3' end of an mRNA and engages stalled ribosomes by destabilizing mRNA in the mRNA channel. Following ribosome-binding, the Pelota-HBS1L complex promotes the disassembly of stalled ribosomes, followed by degradation of damaged mRNAs as part of the NGD pathway. The Dom34-Hbs1 complex is also involved in non-functional rRNA decay. This chain is Elongation factor 1 alpha-like protein, found in Saccharomyces cerevisiae (strain ATCC 204508 / S288c) (Baker's yeast).